The primary structure comprises 64 residues: MSETITVNCPTCGKTVVWGEVSPFRPFCSKRCQLIDLGEWAAEEKRIPSSGDLSESDDWSEEQK.

Residues C9, C12, C28, and C32 each contribute to the Zn(2+) site. The disordered stretch occupies residues 45 to 64 (KRIPSSGDLSESDDWSEEQK). Residues 54-64 (SESDDWSEEQK) are compositionally biased toward acidic residues.

The protein belongs to the DNA gyrase inhibitor YacG family. As to quaternary structure, interacts with GyrB. Zn(2+) is required as a cofactor.

Functionally, inhibits all the catalytic activities of DNA gyrase by preventing its interaction with DNA. Acts by binding directly to the C-terminal domain of GyrB, which probably disrupts DNA binding by the gyrase. The sequence is that of DNA gyrase inhibitor YacG from Citrobacter koseri (strain ATCC BAA-895 / CDC 4225-83 / SGSC4696).